The following is a 443-amino-acid chain: MTGESLDGSLHALTIELDALRRENANLKQQLKEKDGACGELPMSLEEFQRYGRQMIVGETGGLSGQVKLRSARVLIVGAGGLGCPALQYLAGAGIGHLGIVDNDVVEESNLHRQPLHDTSKVGLLKCDSAKEALSRLNPYCSIKTYPVRLSYANAFEIFPSWDLILDCTDSPMSRYLISDVAVNLGKTVVSGSGLGTEGQLSIYNFENKGPCYRCFYPIPPRPGSVVSCQSGGVLGPCIGVLGIMMAVEALKILFGIYTLENFKPFLMQYSGFPYQTLRMFKMRNRKQGCLCCGDNPTITKSTIESGHIKYEAFCGAINYDVLSKDERLSASEFEANYWSQKERGFVCLDVRPRLHYEISHLPGTYNMTVKELDEMEGSIEELQKHIPVITPDLDIVVLCRYGNDSRLATRILKDKFKLRNVRDVKGGYFAYIDEINPSLPKY.

ATP-binding positions include Gly81, Asp102, 109-113 (SNLHR), Lys126, and 170-171 (DS). Cys212 and Cys215 together coordinate Zn(2+). Residue Cys229 is the Glycyl thioester intermediate; for adenylyltransferase activity of the active site. Zn(2+) contacts are provided by Cys290 and Cys293. Positions 342–441 (KERGFVCLDV…YIDEINPSLP (100 aa)) constitute a Rhodanese domain. Residue Cys400 is the Cysteine persulfide intermediate; for sulfurtransferase activity of the active site.

It in the N-terminal section; belongs to the HesA/MoeB/ThiF family. UBA4 subfamily. Zn(2+) serves as cofactor.

The protein localises to the cytoplasm. It localises to the cytosol. Its pathway is tRNA modification; 5-methoxycarbonylmethyl-2-thiouridine-tRNA biosynthesis. Functionally, plays a central role in 2-thiolation of mcm(5)S(2)U at tRNA wobble positions of cytosolic tRNA(Lys), tRNA(Glu) and tRNA(Gln). Acts by mediating the C-terminal thiocarboxylation of sulfur carrier URM1. Its N-terminus first activates URM1 as acyl-adenylate (-COAMP), then the persulfide sulfur on the catalytic cysteine is transferred to URM1 to form thiocarboxylation (-COSH) of its C-terminus. The reaction probably involves hydrogen sulfide that is generated from the persulfide intermediate and that acts as a nucleophile towards URM1. Subsequently, a transient disulfide bond is formed. Does not use thiosulfate as sulfur donor; NFS1 probably acting as a sulfur donor for thiocarboxylation reactions. Prior mcm(5) tRNA modification by the elongator complex is required for 2-thiolation. May also be involved in protein urmylation. The sequence is that of Adenylyltransferase and sulfurtransferase UBA4 from Eremothecium gossypii (strain ATCC 10895 / CBS 109.51 / FGSC 9923 / NRRL Y-1056) (Yeast).